A 158-amino-acid chain; its full sequence is Protein Smg homolog (158 aa).

This sequence belongs to the Smg family.

This is Protein Smg homolog from Coxiella burnetii (strain Dugway 5J108-111).